We begin with the raw amino-acid sequence, 181 residues long: Kappa-casein (181 aa).

The N-terminal stretch at 1–21 (MMRNFIVVVNILALTLPFLAA) is a signal peptide. Thr123 is subject to Phosphothreonine. O-linked (GalNAc...) threonine glycosylation is found at Thr134, Thr144, and Thr155. Ser162 is modified (phosphoserine; alternate). O-linked (GalNAc...) serine; alternate glycosylation occurs at Ser162. Ser178 bears the Phosphoserine mark.

The protein belongs to the kappa-casein family. As to expression, mammary gland specific. Secreted in milk.

It is found in the secreted. Functionally, kappa-casein stabilizes micelle formation, preventing casein precipitation in milk. This is Kappa-casein (Csn3) from Mus musculus (Mouse).